Reading from the N-terminus, the 375-residue chain is N5-carboxyaminoimidazole ribonucleotide synthase (375 aa).

ATP is bound by residues arginine 108, lysine 148, 153–159 (GYDGKGQ), 183–186 (EQYL), glutamate 191, histidine 214, and 268–269 (NE). The ATP-grasp domain occupies 112-298 (KQTLQDSGSN…QFDTHIKAIT (187 aa)).

The protein belongs to the PurK/PurT family. As to quaternary structure, homodimer.

It carries out the reaction 5-amino-1-(5-phospho-beta-D-ribosyl)imidazole + hydrogencarbonate + ATP = 5-carboxyamino-1-(5-phospho-D-ribosyl)imidazole + ADP + phosphate + 2 H(+). It functions in the pathway purine metabolism; IMP biosynthesis via de novo pathway; 5-amino-1-(5-phospho-D-ribosyl)imidazole-4-carboxylate from 5-amino-1-(5-phospho-D-ribosyl)imidazole (N5-CAIR route): step 1/2. Catalyzes the ATP-dependent conversion of 5-aminoimidazole ribonucleotide (AIR) and HCO(3)(-) to N5-carboxyaminoimidazole ribonucleotide (N5-CAIR). The chain is N5-carboxyaminoimidazole ribonucleotide synthase from Staphylococcus saprophyticus subsp. saprophyticus (strain ATCC 15305 / DSM 20229 / NCIMB 8711 / NCTC 7292 / S-41).